The following is a 634-amino-acid chain: Frizzled and smoothened-like protein D (634 aa).

Residues 1–21 (MINKFKFYLIFLKLILILVNC) form the signal peptide. The Extracellular portion of the chain corresponds to 22 to 257 (QNSLNDYGFG…QMDSVINMSK (236 aa)). In terms of domain architecture, FZ spans 34–178 (DESSICTSYI…LTKYGYTANG (145 aa)). Asparagine 126, asparagine 168, asparagine 215, asparagine 243, and asparagine 254 each carry an N-linked (GlcNAc...) asparagine glycan. A helical transmembrane segment spans residues 258-278 (AMSSISFVLSLFNVITFGLLI). The Cytoplasmic segment spans residues 279-287 (KKKSKYNVC). A helical transmembrane segment spans residues 288–308 (IALMAIGSSFIYLSDIINYGV). Residues 309–335 (GIEKQLCPEPGRVATQRVDSLCGFTGS) lie on the Extracellular side of the membrane. The chain crosses the membrane as a helical span at residues 336-356 (IFHIGITLCVLWSMTMGIVLY). Residues 357-368 (SKIKQFKLPNFR) lie on the Cytoplasmic side of the membrane. Residues 369 to 389 (YFLIGNLSFTVVTLIILASAK) traverse the membrane as a helical segment. Residues 390–410 (KFQGGNGFLECWMRDRWYVVA) are Extracellular-facing. The chain crosses the membrane as a helical span at residues 411 to 431 (IFWIPCGIALLLGVLSICGVI). The Cytoplasmic portion of the chain corresponds to 432 to 454 (FEIYKISKNVSLKDSKVVIRELK). A helical membrane pass occupies residues 455 to 475 (PFVLVVTVSASLIYLFVFYFD). Over 476 to 513 (SESKYDFYKKGVEDYILCLLTSENPLDECYTVGPNFNS) the chain is Extracellular. A helical transmembrane segment spans residues 514 to 534 (YFMFYFLIRFFGILFFGIFGT). The Cytoplasmic portion of the chain corresponds to 535-634 (SEIARNAWTE…MEIELDSIDI (100 aa)). The tract at residues 560-624 (VSSSTRGGGG…NNNNNDNNNK (65 aa)) is disordered. Composition is skewed to low complexity over residues 572–592 (SGIK…NNST) and 609–622 (DNTI…NDNN).

The protein belongs to the G-protein coupled receptor Fz/Smo family.

Its subcellular location is the membrane. This is Frizzled and smoothened-like protein D (fslD) from Dictyostelium discoideum (Social amoeba).